The chain runs to 342 residues: Dihydroorotase (342 aa).

His13 and His15 together coordinate Zn(2+). Substrate-binding positions include His15–Arg17 and Asn41. 3 residues coordinate Zn(2+): Lys98, His135, and His173. Position 98 is an N6-carboxylysine (Lys98). Residue His135 participates in substrate binding. Leu218 is a substrate binding site. A Zn(2+)-binding site is contributed by Asp246. The active site involves Asp246. Residues His250 and Ala262 each contribute to the substrate site.

It belongs to the metallo-dependent hydrolases superfamily. DHOase family. Class II DHOase subfamily. In terms of assembly, homodimer. The cofactor is Zn(2+).

It catalyses the reaction (S)-dihydroorotate + H2O = N-carbamoyl-L-aspartate + H(+). The protein operates within pyrimidine metabolism; UMP biosynthesis via de novo pathway; (S)-dihydroorotate from bicarbonate: step 3/3. Catalyzes the reversible cyclization of carbamoyl aspartate to dihydroorotate. The chain is Dihydroorotase from Aliivibrio fischeri (strain ATCC 700601 / ES114) (Vibrio fischeri).